The primary structure comprises 810 residues: Phospholipase D alpha 1 (810 aa).

A propeptide spanning residues 1–36 (MAQHLLHGTLHATIYEVDDLHTGGLRSGFFGKILAN) is cleaved from the precursor. The C2 domain occupies 1–126 (MAQHLLHGTL…IHGEEVDQWV (126 aa)). Asp187 contributes to the Ca(2+) binding site. In terms of domain architecture, PLD phosphodiesterase 1 spans 327–366 (AMFTHHQKIVVVDSEMPSRGGSQMRRIVSFVGGIDLCDGR). Residues His332, Lys334, and Asp339 contribute to the active site. His332 lines the a 1,2-diacyl-sn-glycero-3-phosphate pocket. Residues His372 and His406 each contribute to the Ca(2+) site. Residues Gln522 and His661 each contribute to the a 1,2-diacyl-sn-glycero-3-phosphate site. A PLD phosphodiesterase 2 domain is found at 656–683 (FMIYVHTKMMIVDDEYIIIGSANINQRS). Active-site residues include His661, Lys663, and Asp668. Glu722 lines the Ca(2+) pocket.

The protein belongs to the phospholipase D family. C2-PLD subfamily. Ca(2+) serves as cofactor.

The protein localises to the cytoplasm. It localises to the membrane. The enzyme catalyses a 1,2-diacyl-sn-glycero-3-phosphocholine + H2O = a 1,2-diacyl-sn-glycero-3-phosphate + choline + H(+). Its function is as follows. Hydrolyzes glycerol-phospholipids at the terminal phosphodiesteric bond. Plays an important role in various cellular processes, including phytohormone action, vesicular trafficking, secretion, cytoskeletal arrangement, meiosis, tumor promotion, pathogenesis, membrane deterioration and senescence. This Brassica oleracea var. capitata (Cabbage) protein is Phospholipase D alpha 1 (PLD1).